The primary structure comprises 227 residues: ATP synthase F(0) complex subunit a (227 aa).

Transmembrane regions (helical) follow at residues 14-34 (FLGIPLIALAISIPWLMFPTP), 69-89 (WAILFTALMLFLITINLLGLL), 99-119 (LSLNMAFALPLWLTTVLIGMF), 139-159 (VPVLIIIETISLFIRPLALGV), 165-185 (LTAGHLLMQLIATAAFVLLTM), and 190-210 (ALLTSLVLFLLTILEVAVAMI).

The protein belongs to the ATPase A chain family. In terms of assembly, component of the ATP synthase complex composed at least of ATP5F1A/subunit alpha, ATP5F1B/subunit beta, ATP5MC1/subunit c (homooctomer), MT-ATP6/subunit a, MT-ATP8/subunit 8, ATP5ME/subunit e, ATP5MF/subunit f, ATP5MG/subunit g, ATP5MK/subunit k, ATP5MJ/subunit j, ATP5F1C/subunit gamma, ATP5F1D/subunit delta, ATP5F1E/subunit epsilon, ATP5PF/subunit F6, ATP5PB/subunit b, ATP5PD/subunit d, ATP5PO/subunit OSCP. ATP synthase complex consists of a soluble F(1) head domain (subunits alpha(3) and beta(3)) - the catalytic core - and a membrane F(0) domain - the membrane proton channel (subunits c, a, 8, e, f, g, k and j). These two domains are linked by a central stalk (subunits gamma, delta, and epsilon) rotating inside the F1 region and a stationary peripheral stalk (subunits F6, b, d, and OSCP). Interacts with DNAJC30; interaction is direct.

The protein localises to the mitochondrion inner membrane. It carries out the reaction H(+)(in) = H(+)(out). In terms of biological role, subunit a, of the mitochondrial membrane ATP synthase complex (F(1)F(0) ATP synthase or Complex V) that produces ATP from ADP in the presence of a proton gradient across the membrane which is generated by electron transport complexes of the respiratory chain. ATP synthase complex consist of a soluble F(1) head domain - the catalytic core - and a membrane F(1) domain - the membrane proton channel. These two domains are linked by a central stalk rotating inside the F(1) region and a stationary peripheral stalk. During catalysis, ATP synthesis in the catalytic domain of F(1) is coupled via a rotary mechanism of the central stalk subunits to proton translocation. With the subunit c (ATP5MC1), forms the proton-conducting channel in the F(0) domain, that contains two crucial half-channels (inlet and outlet) that facilitate proton movement from the mitochondrial intermembrane space (IMS) into the matrix. Protons are taken up via the inlet half-channel and released through the outlet half-channel, following a Grotthuss mechanism. This is ATP synthase F(0) complex subunit a from Scyliorhinus canicula (Small-spotted catshark).